We begin with the raw amino-acid sequence, 1220 residues long: MNHIYKLKSYGIGTDRRFYGVANKTLETPDFLDPVRESFDWFLHVGIPEAFDRIFPIVSANGKLEISFRRGSLRVEKPENEYLAIREAKIKGKTYSARVYVTLVKVHSEDGEMEEQEILLAEFPFMTQGGTFIINGFEKVVVSQLIRSPGVCFRENVRNQQADDLFNKVEIIPQLGSWMEIFHKVTGNQVDTVKFRIDKHKNIPLLSFLRAIGFTNETVRKYFGNSPELLESIRRHKLESLEENLELIYRIVRKDDRITEEGLKNLIPSIIFNERRYNLASTGRFMLNAKLNLVERISQTYLAEDLVSKKNKILFKKGTYITRQLALEIQEKFNNEEIPLSEIEGVDSTIYARQLEITRNENLWKRFYVAIVKVWPNKKSMLQESEPVNVIATDPNLNEKTLVLSDIIAIVSYYFNLLSNLGKSDDPDSLVNKRIVSVGELLQNQFLIALTKIEKNSKEKISTKSDLSQLTVKSIINNKPIYNQFKNFFNSSKLSQFMDQINPLGEMASKRKVTSLGPGGLNRDTAQFEVRDVHTTHYGRICPVETPEGQNIGLILNFSVFSRINQYGFIITPYYQVKNRIVDYSKVHWLAASEEFDKSFAQSGVEIDQNNRIIPDKLTVRKNQTYLVLDAEQVNYIDVSSMQMTSISASAIPFLENNDANRALMGSNMQRQAVPLIKSEAPLVATGIEEAVARFSATNLRASISGKVTYVDAKKIIIDDGEKPEIHYLRYFEKSNQETLILQKPTVKVGDKVKKGQLICDGPSTDNGELALGKNVLVAFSTWYGYNYEDAIIISEKLVKDDVFTSIHIQEQTIKFRSTKAGNDILTAEIPNASAKSRLHLDANGIVIVGSEVDTGDILVGRTSPKGEDNPTAEEKLMAAIWGKKALAQKDTSLRVKNGEGGTVIDVQILSRDQGDNLEEGVGMLIKILIAQKRKIKVGDKMAGRHGNKGVVSVILPVEDMPFLEDGTPVDIVLNPQGVPSRMNIGQVLELHLGMVAKKLKTKFVTPVFDGIKIETIKKLFDEANIPESGKFKLFDGISGQAFENPVSVGYMYMLKLLHMVDDKMHARSIGPYSLTTQQPLGGKSQNGGQRFGEMETWALESFGATSVLSELLTYKSDNIQGRNLLYNNIISGGKIPSPGTPESFNVLAYELRGLLIKLEVHKNDQENQEVEEIKDPLELPEIPSNFIDEYNQDGRIELNKLEEFADFDEENIDFDKLTR.

It belongs to the RNA polymerase beta chain family. As to quaternary structure, the RNAP catalytic core consists of 2 alpha, 1 beta, 1 beta' and 1 omega subunit. When a sigma factor is associated with the core the holoenzyme is formed, which can initiate transcription.

The catalysed reaction is RNA(n) + a ribonucleoside 5'-triphosphate = RNA(n+1) + diphosphate. In terms of biological role, DNA-dependent RNA polymerase catalyzes the transcription of DNA into RNA using the four ribonucleoside triphosphates as substrates. This Mesomycoplasma hyopneumoniae (strain 7448) (Mycoplasma hyopneumoniae) protein is DNA-directed RNA polymerase subunit beta.